Here is a 394-residue protein sequence, read N- to C-terminus: Chorismate synthase (394 aa).

2 residues coordinate NADP(+): R40 and R46. Residues 135-137 (RAS), 255-256 (QA), G302, 317-321 (KPISS), and R343 each bind FMN.

Belongs to the chorismate synthase family. Homotetramer. FMNH2 is required as a cofactor.

The enzyme catalyses 5-O-(1-carboxyvinyl)-3-phosphoshikimate = chorismate + phosphate. Its pathway is metabolic intermediate biosynthesis; chorismate biosynthesis; chorismate from D-erythrose 4-phosphate and phosphoenolpyruvate: step 7/7. Functionally, catalyzes the anti-1,4-elimination of the C-3 phosphate and the C-6 proR hydrogen from 5-enolpyruvylshikimate-3-phosphate (EPSP) to yield chorismate, which is the branch point compound that serves as the starting substrate for the three terminal pathways of aromatic amino acid biosynthesis. This reaction introduces a second double bond into the aromatic ring system. The protein is Chorismate synthase of Frankia alni (strain DSM 45986 / CECT 9034 / ACN14a).